The following is a 320-amino-acid chain: MSTPFKMERGVKYRDAAKTSIIPVKNIDPNQDLLKKPEWMKIKLPASSAKIESIKNGMRRHGLHSVCEEASCPNLHECFNHGTATFMILGAICTRRCPFCDVAHGKPLPPDPEEPQKLAETIQDMKLKYVVITSVDRDDLPDRGAGHFSECVKAVRELNPNIKIEILVPDFRGRITQALEKLKDNPPDVFNHNLENVPRLYKEIRPGADYEWSLKLLREFKEIFPNIPTKSGLMVGLGETNEEILQVMQDLRDNGVTMLTLGQYLQPSRHHLPVARYVPPTEFDEFRDKANEMGFEHAACGPFVRSSYHADLQASGGLVK.

Residues Cys67, Cys72, Cys78, Cys93, Cys97, Cys100, and Ser307 each coordinate [4Fe-4S] cluster. The Radical SAM core domain occupies 79 to 296 (FNHGTATFMI…RDKANEMGFE (218 aa)).

It belongs to the radical SAM superfamily. Lipoyl synthase family. Requires [4Fe-4S] cluster as cofactor.

The protein localises to the cytoplasm. The enzyme catalyses [[Fe-S] cluster scaffold protein carrying a second [4Fe-4S](2+) cluster] + N(6)-octanoyl-L-lysyl-[protein] + 2 oxidized [2Fe-2S]-[ferredoxin] + 2 S-adenosyl-L-methionine + 4 H(+) = [[Fe-S] cluster scaffold protein] + N(6)-[(R)-dihydrolipoyl]-L-lysyl-[protein] + 4 Fe(3+) + 2 hydrogen sulfide + 2 5'-deoxyadenosine + 2 L-methionine + 2 reduced [2Fe-2S]-[ferredoxin]. It functions in the pathway protein modification; protein lipoylation via endogenous pathway; protein N(6)-(lipoyl)lysine from octanoyl-[acyl-carrier-protein]: step 2/2. Its function is as follows. Catalyzes the radical-mediated insertion of two sulfur atoms into the C-6 and C-8 positions of the octanoyl moiety bound to the lipoyl domains of lipoate-dependent enzymes, thereby converting the octanoylated domains into lipoylated derivatives. This chain is Lipoyl synthase, found in Haemophilus influenzae (strain ATCC 51907 / DSM 11121 / KW20 / Rd).